We begin with the raw amino-acid sequence, 310 residues long: p-hydroxybenzoic acid efflux pump subunit AaeA (310 aa).

Residues 12–32 (AITVVLVILAFIAIFNAWVYY) traverse the membrane as a helical segment.

This sequence belongs to the membrane fusion protein (MFP) (TC 8.A.1) family.

It is found in the cell inner membrane. In terms of biological role, forms an efflux pump with AaeB. The chain is p-hydroxybenzoic acid efflux pump subunit AaeA from Escherichia coli O7:K1 (strain IAI39 / ExPEC).